Consider the following 408-residue polypeptide: UDP-glucose 4-epimerase 2 (408 aa).

13–44 (TVLVTGGAGYIGSHAVLQLLLAGFRAVVVDNL) contacts NAD(+). Residue Ser-138 coordinates substrate. Catalysis depends on Tyr-162, which acts as the Proton acceptor. The segment at 369 to 408 (GSPKQNGHCTNGFSESTRHNGHNGYGLVDSAKHNGNGHFH) is disordered. The segment covering 370–383 (SPKQNGHCTNGFSE) has biased composition (polar residues).

Belongs to the NAD(P)-dependent epimerase/dehydratase family. It depends on NAD(+) as a cofactor.

The catalysed reaction is UDP-alpha-D-glucose = UDP-alpha-D-galactose. Its pathway is carbohydrate metabolism; galactose metabolism. In terms of biological role, catalyzes the interconversion between UDP-glucose and UDP-galactose. The chain is UDP-glucose 4-epimerase 2 (UGE-2) from Oryza sativa subsp. japonica (Rice).